Here is a 234-residue protein sequence, read N- to C-terminus: Small ribosomal subunit protein uS2 (234 aa).

It belongs to the universal ribosomal protein uS2 family.

The sequence is that of Small ribosomal subunit protein uS2 from Prochlorococcus marinus (strain AS9601).